Here is a 247-residue protein sequence, read N- to C-terminus: Cell division protein ZapD (247 aa).

The protein belongs to the ZapD family. Interacts with FtsZ.

It is found in the cytoplasm. In terms of biological role, cell division factor that enhances FtsZ-ring assembly. Directly interacts with FtsZ and promotes bundling of FtsZ protofilaments, with a reduction in FtsZ GTPase activity. The protein is Cell division protein ZapD of Cronobacter sakazakii (strain ATCC BAA-894) (Enterobacter sakazakii).